Here is a 528-residue protein sequence, read N- to C-terminus: uncharacterized protein (528 aa).

Composition is skewed to basic residues over residues 1 to 16 (MGKA…KNHL) and 25 to 43 (QLAR…SHTK). Residues 1 to 59 (MGKASKATKKFTKNHLKNTIERRKQLARSKKVYGTKNRNSHTKNKLESGTNDNNKNKED) form a disordered region.

The protein belongs to the NOC2 family.

The protein resides in the nucleus. It localises to the nucleolus. This is an uncharacterized protein from Schizosaccharomyces pombe (strain 972 / ATCC 24843) (Fission yeast).